The sequence spans 144 residues: MKAISRRRARECTLQALYSWQVSKNDVKEIERYVVTEQDIQDCNISYFHELYIGVISCAEELDKLMIPHLSRNLEKLGYIEHSVLRIALFELTKCNDIPYKVAINEAIELVKIFGAEKSHKFINGVLDKIANQLCVSTNNHIIK.

This sequence belongs to the NusB family.

Its function is as follows. Involved in transcription antitermination. Required for transcription of ribosomal RNA (rRNA) genes. Binds specifically to the boxA antiterminator sequence of the ribosomal RNA (rrn) operons. This is Transcription antitermination protein NusB from Blochmanniella pennsylvanica (strain BPEN).